The primary structure comprises 590 residues: Aspartate--tRNA ligase (590 aa).

L-aspartate is bound at residue E174. The interval 198-201 (QLMK) is aspartate. R220 lines the L-aspartate pocket. Residues 220–222 (RDE) and Q229 contribute to the ATP site. H443 is a binding site for L-aspartate. ATP is bound at residue E484. L-aspartate is bound at residue R491. 536–539 (GLDR) lines the ATP pocket.

The protein belongs to the class-II aminoacyl-tRNA synthetase family. Type 1 subfamily. As to quaternary structure, homodimer.

The protein resides in the cytoplasm. The catalysed reaction is tRNA(Asp) + L-aspartate + ATP = L-aspartyl-tRNA(Asp) + AMP + diphosphate. Its function is as follows. Catalyzes the attachment of L-aspartate to tRNA(Asp) in a two-step reaction: L-aspartate is first activated by ATP to form Asp-AMP and then transferred to the acceptor end of tRNA(Asp). The chain is Aspartate--tRNA ligase from Lactococcus lactis subsp. cremoris (strain SK11).